We begin with the raw amino-acid sequence, 660 residues long: Methionine--tRNA ligase 1 (660 aa).

Positions 15–25 match the 'HIGH' region motif; sequence YYPSGKLHIGH. A 'KMSKS' region motif is present at residues 310-314; that stretch reads KMSKS. K313 serves as a coordination point for ATP. Positions 560–660 constitute a tRNA-binding domain; the sequence is DFFKVELRVA…QNIPNGTKIK (101 aa).

This sequence belongs to the class-I aminoacyl-tRNA synthetase family. MetG type 2B subfamily. Homodimer.

The protein localises to the cytoplasm. The enzyme catalyses tRNA(Met) + L-methionine + ATP = L-methionyl-tRNA(Met) + AMP + diphosphate. In terms of biological role, is required not only for elongation of protein synthesis but also for the initiation of all mRNA translation through initiator tRNA(fMet) aminoacylation. This chain is Methionine--tRNA ligase 1, found in Bacillus anthracis.